Reading from the N-terminus, the 417-residue chain is Serine--tRNA ligase (417 aa).

226–228 serves as a coordination point for L-serine; sequence TSE. ATP is bound by residues 257 to 259 and valine 273; that span reads RRE. Glutamate 280 is a binding site for L-serine. 344 to 347 contacts ATP; that stretch reads ELTS. Residue threonine 379 participates in L-serine binding.

Belongs to the class-II aminoacyl-tRNA synthetase family. Type-1 seryl-tRNA synthetase subfamily. As to quaternary structure, homodimer. The tRNA molecule binds across the dimer.

It localises to the cytoplasm. The catalysed reaction is tRNA(Ser) + L-serine + ATP = L-seryl-tRNA(Ser) + AMP + diphosphate + H(+). The enzyme catalyses tRNA(Sec) + L-serine + ATP = L-seryl-tRNA(Sec) + AMP + diphosphate + H(+). It functions in the pathway aminoacyl-tRNA biosynthesis; selenocysteinyl-tRNA(Sec) biosynthesis; L-seryl-tRNA(Sec) from L-serine and tRNA(Sec): step 1/1. Its function is as follows. Catalyzes the attachment of serine to tRNA(Ser). Is also able to aminoacylate tRNA(Sec) with serine, to form the misacylated tRNA L-seryl-tRNA(Sec), which will be further converted into selenocysteinyl-tRNA(Sec). This Mycobacterium sp. (strain KMS) protein is Serine--tRNA ligase.